We begin with the raw amino-acid sequence, 128 residues long: MTSSPDITVSVQVHHLPAQSTPQRQLFAYFITIENNTDDSWKLLSRHWTITSGDGQQFTVEGEGVVGEQPLLAPGAQYTYNSFVTVDALPGRMEGHYVMGDAWGQTAQVPIPPFRLDIAPESGERLLN.

An ApaG domain is found at 1 to 123 (MTSSPDITVS…FRLDIAPESG (123 aa)).

This Deinococcus radiodurans (strain ATCC 13939 / DSM 20539 / JCM 16871 / CCUG 27074 / LMG 4051 / NBRC 15346 / NCIMB 9279 / VKM B-1422 / R1) protein is Protein ApaG.